A 465-amino-acid polypeptide reads, in one-letter code: Ribulose bisphosphate carboxylase large chain (465 aa).

Position 4 is an N6,N6,N6-trimethyllysine (Lys-4). Substrate-binding residues include Asn-113 and Thr-163. The active-site Proton acceptor is Lys-165. Residue Lys-167 participates in substrate binding. 3 residues coordinate Mg(2+): Lys-191, Asp-193, and Glu-194. Lys-191 bears the N6-carboxylysine mark. His-284 functions as the Proton acceptor in the catalytic mechanism. Substrate-binding residues include Arg-285, His-317, and Ser-369.

This sequence belongs to the RuBisCO large chain family. Type I subfamily. As to quaternary structure, heterohexadecamer of 8 large chains and 8 small chains; disulfide-linked. The disulfide link is formed within the large subunit homodimers. Mg(2+) serves as cofactor. In terms of processing, the disulfide bond which can form in the large chain dimeric partners within the hexadecamer appears to be associated with oxidative stress and protein turnover.

It is found in the plastid. The protein localises to the chloroplast. It catalyses the reaction 2 (2R)-3-phosphoglycerate + 2 H(+) = D-ribulose 1,5-bisphosphate + CO2 + H2O. It carries out the reaction D-ribulose 1,5-bisphosphate + O2 = 2-phosphoglycolate + (2R)-3-phosphoglycerate + 2 H(+). Functionally, ruBisCO catalyzes two reactions: the carboxylation of D-ribulose 1,5-bisphosphate, the primary event in carbon dioxide fixation, as well as the oxidative fragmentation of the pentose substrate in the photorespiration process. Both reactions occur simultaneously and in competition at the same active site. The sequence is that of Ribulose bisphosphate carboxylase large chain from Senega cruciata (Cross-leaved milkwort).